Reading from the N-terminus, the 670-residue chain is DNA ligase (670 aa).

NAD(+) is bound by residues 35-39 (DSVYD), 84-85 (SL), and glutamate 116. Lysine 118 (N6-AMP-lysine intermediate) is an active-site residue. Residues arginine 139, glutamate 176, lysine 293, and lysine 317 each contribute to the NAD(+) site. 4 residues coordinate Zn(2+): cysteine 411, cysteine 414, cysteine 429, and cysteine 435. A BRCT domain is found at 592–670 (VVKSEIAGKT…EEAFLKLLKS (79 aa)).

It belongs to the NAD-dependent DNA ligase family. LigA subfamily. The cofactor is Mg(2+). Requires Mn(2+) as cofactor.

It carries out the reaction NAD(+) + (deoxyribonucleotide)n-3'-hydroxyl + 5'-phospho-(deoxyribonucleotide)m = (deoxyribonucleotide)n+m + AMP + beta-nicotinamide D-nucleotide.. Functionally, DNA ligase that catalyzes the formation of phosphodiester linkages between 5'-phosphoryl and 3'-hydroxyl groups in double-stranded DNA using NAD as a coenzyme and as the energy source for the reaction. It is essential for DNA replication and repair of damaged DNA. In Coxiella burnetii (strain RSA 331 / Henzerling II), this protein is DNA ligase.